A 73-amino-acid polypeptide reads, in one-letter code: ATP synthase subunit 9, mitochondrial (73 aa).

2 helical membrane-spanning segments follow: residues 12 to 32 and 50 to 70; these read VAALGLIGAGIGVGIVFAALI and ILGFALSEATGLFALMVSFLL.

The protein belongs to the ATPase C chain family. As to quaternary structure, F-type ATPases have 2 components, CF(1) - the catalytic core - and CF(0) - the membrane proton channel. CF(1) has five subunits: alpha(3), beta(3), gamma(1), delta(1), epsilon(1). CF(0) has three main subunits: a, b and c.

The protein localises to the mitochondrion inner membrane. Mitochondrial membrane ATP synthase (F(1)F(0) ATP synthase or Complex V) produces ATP from ADP in the presence of a proton gradient across the membrane which is generated by electron transport complexes of the respiratory chain. F-type ATPases consist of two structural domains, F(1) - containing the extramembraneous catalytic core and F(0) - containing the membrane proton channel, linked together by a central stalk and a peripheral stalk. During catalysis, ATP synthesis in the catalytic domain of F(1) is coupled via a rotary mechanism of the central stalk subunits to proton translocation. Part of the complex F(0) domain. A homomeric c-ring of probably 10 subunits is part of the complex rotary element. The chain is ATP synthase subunit 9, mitochondrial (ATP9) from Mycosarcoma maydis (Corn smut fungus).